Consider the following 365-residue polypeptide: Outer membrane protein assembly factor BamC (365 aa).

The signal sequence occupies residues 1–19; it reads MKHNRLAIAALAPVLILVG. Residue Cys-20 is the site of N-palmitoyl cysteine attachment. Cys-20 carries S-diacylglycerol cysteine lipidation.

The protein belongs to the BamC family. As to quaternary structure, part of the Bam complex.

The protein resides in the cell outer membrane. Part of the outer membrane protein assembly complex, which is involved in assembly and insertion of beta-barrel proteins into the outer membrane. The chain is Outer membrane protein assembly factor BamC from Ferrimonas balearica (strain DSM 9799 / CCM 4581 / KCTC 23876 / PAT).